The primary structure comprises 260 residues: Tryptophan 2,3-dioxygenase (260 aa).

Substrate-binding positions include 34-38 (FIVIH) and Arg-100. His-219 is a binding site for heme. Thr-233 contributes to the substrate binding site.

Belongs to the tryptophan 2,3-dioxygenase family. In terms of assembly, homotetramer. The cofactor is heme.

It catalyses the reaction L-tryptophan + O2 = N-formyl-L-kynurenine. It participates in amino-acid degradation; L-tryptophan degradation via kynurenine pathway; L-kynurenine from L-tryptophan: step 1/2. Functionally, heme-dependent dioxygenase that catalyzes the oxidative cleavage of the L-tryptophan (L-Trp) pyrrole ring and converts L-tryptophan to N-formyl-L-kynurenine. Catalyzes the oxidative cleavage of the indole moiety. This chain is Tryptophan 2,3-dioxygenase, found in Herpetosiphon aurantiacus (strain ATCC 23779 / DSM 785 / 114-95).